The primary structure comprises 430 residues: S-adenosylmethionine synthase (430 aa).

An ATP-binding site is contributed by histidine 14. Aspartate 16 is a Mg(2+) binding site. A K(+)-binding site is contributed by glutamate 42. L-methionine is bound by residues glutamate 55 and glutamine 98. The interval 98-108 (QSPDINRGVER) is flexible loop. Residues 164–166 (DAK), 254–255 (KF), aspartate 263, 269–270 (RK), alanine 286, and lysine 290 each bind ATP. Aspartate 263 provides a ligand contact to L-methionine. Lysine 294 provides a ligand contact to L-methionine.

This sequence belongs to the AdoMet synthase family. Homotetramer; dimer of dimers. Requires Mg(2+) as cofactor. It depends on K(+) as a cofactor.

Its subcellular location is the cytoplasm. The catalysed reaction is L-methionine + ATP + H2O = S-adenosyl-L-methionine + phosphate + diphosphate. Its pathway is amino-acid biosynthesis; S-adenosyl-L-methionine biosynthesis; S-adenosyl-L-methionine from L-methionine: step 1/1. Catalyzes the formation of S-adenosylmethionine (AdoMet) from methionine and ATP. The overall synthetic reaction is composed of two sequential steps, AdoMet formation and the subsequent tripolyphosphate hydrolysis which occurs prior to release of AdoMet from the enzyme. The polypeptide is S-adenosylmethionine synthase (Bacteroides thetaiotaomicron (strain ATCC 29148 / DSM 2079 / JCM 5827 / CCUG 10774 / NCTC 10582 / VPI-5482 / E50)).